The sequence spans 154 residues: Myoglobin (154 aa).

Residues 2–148 (GLSDQEWQQV…FRNDMASKYK (147 aa)) enclose the Globin domain. Position 65 (His65) interacts with nitrite. Residue His65 participates in O2 binding. His94 is a heme b binding site.

Monomeric.

It localises to the cytoplasm. The protein localises to the sarcoplasm. The catalysed reaction is Fe(III)-heme b-[protein] + nitric oxide + H2O = Fe(II)-heme b-[protein] + nitrite + 2 H(+). The enzyme catalyses H2O2 + AH2 = A + 2 H2O. Functionally, monomeric heme protein which primary function is to store oxygen and facilitate its diffusion within muscle tissues. Reversibly binds oxygen through a pentacoordinated heme iron and enables its timely and efficient release as needed during periods of heightened demand. Depending on the oxidative conditions of tissues and cells, and in addition to its ability to bind oxygen, it also has a nitrite reductase activity whereby it regulates the production of bioactive nitric oxide. Under stress conditions, like hypoxia and anoxia, it also protects cells against reactive oxygen species thanks to its pseudoperoxidase activity. This Struthio camelus (Common ostrich) protein is Myoglobin (MB).